We begin with the raw amino-acid sequence, 247 residues long: Segregation and condensation protein A (247 aa).

This sequence belongs to the ScpA family. As to quaternary structure, component of a cohesin-like complex composed of ScpA, ScpB and the Smc homodimer, in which ScpA and ScpB bind to the head domain of Smc. The presence of the three proteins is required for the association of the complex with DNA.

Its subcellular location is the cytoplasm. Its function is as follows. Participates in chromosomal partition during cell division. May act via the formation of a condensin-like complex containing Smc and ScpB that pull DNA away from mid-cell into both cell halves. The sequence is that of Segregation and condensation protein A from Lactobacillus johnsonii (strain CNCM I-12250 / La1 / NCC 533).